Reading from the N-terminus, the 176-residue chain is Large ribosomal subunit protein bL19 (176 aa).

This sequence belongs to the bacterial ribosomal protein bL19 family.

Its function is as follows. This protein is located at the 30S-50S ribosomal subunit interface and may play a role in the structure and function of the aminoacyl-tRNA binding site. The sequence is that of Large ribosomal subunit protein bL19 from Sinorhizobium fredii (strain NBRC 101917 / NGR234).